Reading from the N-terminus, the 294-residue chain is UDP-3-O-acyl-N-acetylglucosamine deacetylase (294 aa).

The Zn(2+) site is built by His-75, His-232, and Asp-236. The Proton donor role is filled by His-259.

It belongs to the LpxC family. Zn(2+) is required as a cofactor.

It catalyses the reaction a UDP-3-O-[(3R)-3-hydroxyacyl]-N-acetyl-alpha-D-glucosamine + H2O = a UDP-3-O-[(3R)-3-hydroxyacyl]-alpha-D-glucosamine + acetate. Its pathway is glycolipid biosynthesis; lipid IV(A) biosynthesis; lipid IV(A) from (3R)-3-hydroxytetradecanoyl-[acyl-carrier-protein] and UDP-N-acetyl-alpha-D-glucosamine: step 2/6. In terms of biological role, catalyzes the hydrolysis of UDP-3-O-myristoyl-N-acetylglucosamine to form UDP-3-O-myristoylglucosamine and acetate, the committed step in lipid A biosynthesis. The protein is UDP-3-O-acyl-N-acetylglucosamine deacetylase of Campylobacter concisus (strain 13826).